The following is a 34-amino-acid chain: PASPQKRAASPRRSPKKSPRKSPKKSPRKRSASP.

Residues 1-34 are disordered; it reads PASPQKRAASPRRSPKKSPRKSPKKSPRKRSASP. The span at 9-34 shows a compositional bias: basic residues; it reads ASPRRSPKKSPRKSPKKSPRKRSASP.

This sequence belongs to the histone H1/H5 family. Sperm.

The protein resides in the nucleus. The protein localises to the chromosome. Histones H1 are necessary for the condensation of nucleosome chains into higher-order structures. In Strongylocentrotus purpuratus (Purple sea urchin), this protein is Histone H1, sperm.